Consider the following 142-residue polypeptide: Large ribosomal subunit protein uL11 (142 aa).

It belongs to the universal ribosomal protein uL11 family. In terms of assembly, part of the ribosomal stalk of the 50S ribosomal subunit. Interacts with L10 and the large rRNA to form the base of the stalk. L10 forms an elongated spine to which L12 dimers bind in a sequential fashion forming a multimeric L10(L12)X complex. Post-translationally, one or more lysine residues are methylated.

In terms of biological role, forms part of the ribosomal stalk which helps the ribosome interact with GTP-bound translation factors. This Maricaulis maris (strain MCS10) (Caulobacter maris) protein is Large ribosomal subunit protein uL11.